The chain runs to 114 residues: Hemerythrin subunit 1 (114 aa).

Fe cation-binding residues include H26, H55, E59, H74, H78, H102, and D107.

It belongs to the hemerythrin family.

In terms of biological role, hemerythrin is a respiratory protein in blood cells of certain marine worms. The oxygen-binding site in each chain contains two iron atoms. In Golfingia vulgaris (Marine worm), this protein is Hemerythrin subunit 1.